Here is a 153-residue protein sequence, read N- to C-terminus: Xanthine-guanine phosphoribosyltransferase (153 aa).

5-phospho-alpha-D-ribose 1-diphosphate is bound by residues 37–38 and 89–97; these read RG and DDLVDTGNT. A Mg(2+)-binding site is contributed by Asp90. Guanine contacts are provided by Asp93 and Ile136. Positions 93 and 136 each coordinate xanthine. GMP is bound by residues 93–97 and 135–136; these read DTGNT and WI.

It belongs to the purine/pyrimidine phosphoribosyltransferase family. XGPT subfamily. As to quaternary structure, homotetramer. Requires Mg(2+) as cofactor.

Its subcellular location is the cell inner membrane. It catalyses the reaction GMP + diphosphate = guanine + 5-phospho-alpha-D-ribose 1-diphosphate. It carries out the reaction XMP + diphosphate = xanthine + 5-phospho-alpha-D-ribose 1-diphosphate. The enzyme catalyses IMP + diphosphate = hypoxanthine + 5-phospho-alpha-D-ribose 1-diphosphate. It functions in the pathway purine metabolism; GMP biosynthesis via salvage pathway; GMP from guanine: step 1/1. It participates in purine metabolism; XMP biosynthesis via salvage pathway; XMP from xanthine: step 1/1. In terms of biological role, purine salvage pathway enzyme that catalyzes the transfer of the ribosyl-5-phosphate group from 5-phospho-alpha-D-ribose 1-diphosphate (PRPP) to the N9 position of the 6-oxopurines guanine and xanthine to form the corresponding ribonucleotides GMP (guanosine 5'-monophosphate) and XMP (xanthosine 5'-monophosphate), with the release of PPi. To a lesser extent, also acts on hypoxanthine. The chain is Xanthine-guanine phosphoribosyltransferase from Pasteurella multocida (strain Pm70).